Here is a 173-residue protein sequence, read N- to C-terminus: NADH-ubiquinone oxidoreductase chain 6 (173 aa).

5 helical membrane-spanning segments follow: residues 1–21, 27–47, 48–68, 87–107, and 139–159; these read MTYF…AVAS, YGVL…LSLG, VSFI…VVFV, VVIY…VGDF, and WGAG…FVVL.

This sequence belongs to the complex I subunit 6 family.

The protein localises to the mitochondrion membrane. It carries out the reaction a ubiquinone + NADH + 5 H(+)(in) = a ubiquinol + NAD(+) + 4 H(+)(out). In terms of biological role, core subunit of the mitochondrial membrane respiratory chain NADH dehydrogenase (Complex I) that is believed to belong to the minimal assembly required for catalysis. Complex I functions in the transfer of electrons from NADH to the respiratory chain. The immediate electron acceptor for the enzyme is believed to be ubiquinone. The chain is NADH-ubiquinone oxidoreductase chain 6 (MT-ND6) from Struthio camelus (Common ostrich).